The primary structure comprises 571 residues: uncharacterized protein (571 aa).

A run of 11 helical transmembrane segments spans residues 5–27 (VILN…GYLV), 34–56 (TFVL…LNIT), 61–79 (IGSL…QGGA), 92–114 (LLAS…AWIF), 161–183 (TVGY…ATIF), 391–408 (FIFF…GLIS), 412–434 (FGIS…FGWI), 455–474 (LGLA…QAIT), 484–506 (FFLG…YYLL), 513–532 (VLLA…AALL), and 547–569 (SYAL…VTII).

This sequence belongs to the AAE transporter (TC 2.A.81) family.

It localises to the cell membrane. This is an uncharacterized protein from Francisella tularensis subsp. tularensis (strain SCHU S4 / Schu 4).